The primary structure comprises 255 residues: U2 small nuclear ribonucleoprotein A' (255 aa).

LRR repeat units follow at residues 20-41, 43-64, 65-86, and 89-110; these read RDRE…GATL, QFDA…PLLR, RLKT…LDQA, and CLTE…DPLA. The region spanning 123 to 161 is the LRRCT domain; sequence NPVTNKKHYRLYVIYKVPQVRVLDFQKVKLKERQEAEKM. Residue lysine 172 is modified to N6-acetyllysine; alternate. Residue lysine 172 forms a Glycyl lysine isopeptide (Lys-Gly) (interchain with G-Cter in SUMO2); alternate linkage. Phosphoserine occurs at positions 178 and 197. The segment at 179 to 199 is disordered; that stretch reads KTFNPGAGLPTDKKKGGPSAG. Residue lysine 221 forms a Glycyl lysine isopeptide (Lys-Gly) (interchain with G-Cter in SUMO2) linkage. The disordered stretch occupies residues 222-255; it reads GLLQSGQIPGRERRSGPSDEGEEEIEDDTVTNGS. Serine 236 and serine 255 each carry phosphoserine. A compositionally biased stretch (acidic residues) spans 240–255; sequence DEGEEEIEDDTVTNGS.

It belongs to the U2 small nuclear ribonucleoprotein A family. Identified in the spliceosome B complex. Identified in the spliceosome C complex. Found in a pre-mRNA splicing complex with SFRS4, SFRS5, SNRNP70, SNRPA1, SRRM1 and SRRM2. Found in a pre-mRNA exonic splicing enhancer (ESE) complex with SNRNP70, SNRPA1, SRRM1 and TRA2B. Contributes to the binding of stem loop IV of U2 snRNA with SNRPB2.

It localises to the nucleus. Involved in pre-mRNA splicing as component of the spliceosome. Associated with sn-RNP U2, where it contributes to the binding of stem loop IV of U2 snRNA. The chain is U2 small nuclear ribonucleoprotein A' (Snrpa1) from Mus musculus (Mouse).